The chain runs to 455 residues: Probable glycine dehydrogenase (decarboxylating) subunit 1 (455 aa).

This sequence belongs to the GcvP family. N-terminal subunit subfamily. The glycine cleavage system is composed of four proteins: P, T, L and H. In this organism, the P 'protein' is a heterodimer of two subunits.

The catalysed reaction is N(6)-[(R)-lipoyl]-L-lysyl-[glycine-cleavage complex H protein] + glycine + H(+) = N(6)-[(R)-S(8)-aminomethyldihydrolipoyl]-L-lysyl-[glycine-cleavage complex H protein] + CO2. Its function is as follows. The glycine cleavage system catalyzes the degradation of glycine. The P protein binds the alpha-amino group of glycine through its pyridoxal phosphate cofactor; CO(2) is released and the remaining methylamine moiety is then transferred to the lipoamide cofactor of the H protein. The sequence is that of Probable glycine dehydrogenase (decarboxylating) subunit 1 from Francisella tularensis subsp. mediasiatica (strain FSC147).